The following is a 101-amino-acid chain: NADH-quinone oxidoreductase subunit K (101 aa).

Transmembrane regions (helical) follow at residues 4-24, 30-50, and 61-81; these read LPHY…GIFV, IVIL…LVAF, and IFAM…LAIL.

The protein belongs to the complex I subunit 4L family. In terms of assembly, NDH-1 is composed of 14 different subunits. Subunits NuoA, H, J, K, L, M, N constitute the membrane sector of the complex.

The protein resides in the cell inner membrane. It catalyses the reaction a quinone + NADH + 5 H(+)(in) = a quinol + NAD(+) + 4 H(+)(out). NDH-1 shuttles electrons from NADH, via FMN and iron-sulfur (Fe-S) centers, to quinones in the respiratory chain. The immediate electron acceptor for the enzyme in this species is believed to be ubiquinone. Couples the redox reaction to proton translocation (for every two electrons transferred, four hydrogen ions are translocated across the cytoplasmic membrane), and thus conserves the redox energy in a proton gradient. In Caulobacter vibrioides (strain ATCC 19089 / CIP 103742 / CB 15) (Caulobacter crescentus), this protein is NADH-quinone oxidoreductase subunit K.